A 61-amino-acid polypeptide reads, in one-letter code: uncharacterized protein (61 aa).

The interval 39–61 (PRPFTPGLADPRRLGPRRVQAAQ) is disordered.

This is an uncharacterized protein from Pan troglodytes (Chimpanzee).